Here is a 120-residue protein sequence, read N- to C-terminus: NAD(P)H-quinone oxidoreductase subunit 3, chloroplastic (120 aa).

Transmembrane regions (helical) follow at residues 10-30 (FWAFLIISSLIPILAFFISGV), 64-84 (MFALVFVVFDVETVFLYPWAM), and 88-108 (VLGVSVFIEAFIFVLILIGGL).

It belongs to the complex I subunit 3 family. NDH is composed of at least 16 different subunits, 5 of which are encoded in the nucleus.

It is found in the plastid. It localises to the chloroplast thylakoid membrane. The catalysed reaction is a plastoquinone + NADH + (n+1) H(+)(in) = a plastoquinol + NAD(+) + n H(+)(out). It catalyses the reaction a plastoquinone + NADPH + (n+1) H(+)(in) = a plastoquinol + NADP(+) + n H(+)(out). Its function is as follows. NDH shuttles electrons from NAD(P)H:plastoquinone, via FMN and iron-sulfur (Fe-S) centers, to quinones in the photosynthetic chain and possibly in a chloroplast respiratory chain. The immediate electron acceptor for the enzyme in this species is believed to be plastoquinone. Couples the redox reaction to proton translocation, and thus conserves the redox energy in a proton gradient. In Ipomoea purpurea (Common morning glory), this protein is NAD(P)H-quinone oxidoreductase subunit 3, chloroplastic.